The primary structure comprises 326 residues: MPELNTARGPIDTADLGVTLMHEHVFIMTTEIAQNYPEAWGDEDKRVAGAIARLGELKARGVDTIVDLTVIGLGRYIPRIARVAAATELNIVVATGLYTYNDVPFYFHYLGPGAQLDGPEIMTDMFVRDIEHGIADTGIKAGILKCATDEPGLTPGVERVLRAVAQAHKRTGAPISTHTHAGLRRGLDQQRIFAEEGVDLSRVVIGHCGDSTDVGYLEELIAAGSYLGMDRFGVDVISPFQDRVNIVARMCERGHADKMVLSHDACCYFDALPEELVPVAMPNWHYLHIHNDVIPALKQHGVTDEQLHTMLVDNPRRIFERQGGYQ.

Zn(2+)-binding residues include His-22, His-24, Lys-145, His-178, His-207, and Asp-264. At Lys-145 the chain carries N6-carboxylysine.

Belongs to the metallo-dependent hydrolases superfamily. Phosphotriesterase family. The cofactor is Zn(2+).

The protein is Phosphotriesterase homology protein (php) of Mycobacterium tuberculosis (strain CDC 1551 / Oshkosh).